A 356-amino-acid polypeptide reads, in one-letter code: Phosphate acyltransferase (356 aa).

Belongs to the PlsX family. As to quaternary structure, homodimer. Probably interacts with PlsY.

Its subcellular location is the cytoplasm. The enzyme catalyses a fatty acyl-[ACP] + phosphate = an acyl phosphate + holo-[ACP]. The protein operates within lipid metabolism; phospholipid metabolism. In terms of biological role, catalyzes the reversible formation of acyl-phosphate (acyl-PO(4)) from acyl-[acyl-carrier-protein] (acyl-ACP). This enzyme utilizes acyl-ACP as fatty acyl donor, but not acyl-CoA. In Stutzerimonas stutzeri (strain A1501) (Pseudomonas stutzeri), this protein is Phosphate acyltransferase.